A 465-amino-acid polypeptide reads, in one-letter code: MSSELMFNYTFSWPAGPKDVILTGTFDDWRGTLPLVKTAKGNFEITMPVKLANKDDTFQFKFIVDGVWCVSDSYKKEHVSEGIENNFLQITDLVETQEVAGASRIPEAGGLLCGKPPRSAGPPSTSNRKKNKRNNKKRRSKLKKKSTKNNKKSNESLDDNEEEDGVTGTTTEDVTGTSREETPLAEPTNVSKEAPGNFHILPIDQSADTTKSNGIIGGPGPVLVPNPGEIKEFTEIRDVDARELNERLNKKEEVPEPVAGPIVESSVTEKSPALPQADDPIVETKEVAHNVQELTPQVEAVTPLINEPEPLPTPEAQISIPESSKVEPVEGSLQSKLVEKRESTEGVLDGSKKVENKAKKDEEVFTLDPIVNKAPKLPLTDEQTAEGRKSPAVSEEKEKKKKQEKGSKEVKRSETSKEKKPSAKEVKKQTVKASKKQTASPLSSSTEEPKKKKTGFFGKLKKLFK.

2 disordered regions span residues 107-227 and 247-276; these read EAGG…VPNP and RLNKKEEVPEPVAGPIVESSVTEKSPALPQ. Basic residues predominate over residues 127–151; that stretch reads NRKKNKRNNKKRRSKLKKKSTKNNK. Phosphoserine occurs at positions 153 and 156. Acidic residues predominate over residues 156–165; sequence SLDDNEEEDG. The segment at 160–161 is X-DNA-binding; sequence NE. Positions 166-177 are enriched in low complexity; the sequence is VTGTTTEDVTGT. Threonine 182 carries the post-translational modification Phosphothreonine. Serine 271 carries the phosphoserine modification. Threonine 295 is subject to Phosphothreonine. Positions 298–465 are disordered; that stretch reads VEAVTPLINE…FFGKLKKLFK (168 aa). Phosphoserine is present on residues serine 319 and serine 343. Over residues 337-363 the composition is skewed to basic and acidic residues; the sequence is LVEKRESTEGVLDGSKKVENKAKKDEE. Residue threonine 366 is modified to Phosphothreonine. Basic and acidic residues-rich tracts occupy residues 385-398 and 404-428; these read AEGRKSPAVSEEKE and EKGSKEVKRSETSKEKKPSAKEVKK. Position 394 is a phosphoserine (serine 394). A Phosphoserine modification is found at serine 440. The segment covering 451–465 has biased composition (basic residues); that stretch reads KKKTGFFGKLKKLFK.

It belongs to the CRP1/MDG1 family. In terms of processing, cleaved in the vicinity of position 160 to give an X-DNA-binding N-terminal subpeptide and a non-DNA-binding C-terminal subpeptide.

Cruciform DNA-binding protein which exerts an enhancing effect on the cleavage of cruciform DNA (X-DNA) by endonuclease VII from bacteriophage T4. This chain is Cruciform DNA-recognizing protein 1 (CRP1), found in Saccharomyces cerevisiae (strain Lalvin EC1118 / Prise de mousse) (Baker's yeast).